The following is a 129-amino-acid chain: MATRKTSRKRRVKKNIEAGVAHIHATFNNTLVMITDVQGNAIAWSSAGALGFKGSRKSTPFAAQMAAEAAAKASQEHGIKSVEVAVKGPGSGRESAIRAIQAAGIEITAIRDVTPVPHNGTRPPKRRRV.

It belongs to the universal ribosomal protein uS11 family. Part of the 30S ribosomal subunit. Interacts with proteins S7 and S18. Binds to IF-3.

Functionally, located on the platform of the 30S subunit, it bridges several disparate RNA helices of the 16S rRNA. Forms part of the Shine-Dalgarno cleft in the 70S ribosome. The sequence is that of Small ribosomal subunit protein uS11 from Levilactobacillus brevis (strain ATCC 367 / BCRC 12310 / CIP 105137 / JCM 1170 / LMG 11437 / NCIMB 947 / NCTC 947) (Lactobacillus brevis).